A 623-amino-acid chain; its full sequence is Probable methyltransferase PMT8 (623 aa).

The Cytoplasmic segment spans residues 1-13 (MMRGRSDGGLKKR). Residues 14 to 34 (LIASVCVVALFVCFLFMYYGS) form a helical; Signal-anchor for type II membrane protein membrane-spanning segment. Residues 35–623 (SSQGASALEY…LTSESLRDSE (589 aa)) are Lumenal-facing. N-linked (GlcNAc...) asparagine glycosylation is found at Asn204, Asn350, and Asn588.

Belongs to the methyltransferase superfamily.

The protein resides in the golgi apparatus membrane. The sequence is that of Probable methyltransferase PMT8 from Arabidopsis thaliana (Mouse-ear cress).